A 446-amino-acid polypeptide reads, in one-letter code: Probable D-serine dehydratase (446 aa).

Lys-116 carries the N6-(pyridoxal phosphate)lysine modification.

Belongs to the serine/threonine dehydratase family. DsdA subfamily. The cofactor is pyridoxal 5'-phosphate.

It catalyses the reaction D-serine = pyruvate + NH4(+). The protein is Probable D-serine dehydratase of Bacillus cereus (strain 03BB102).